The chain runs to 91 residues: Dynein light chain 1, cytoplasmic (91 aa).

Belongs to the dynein light chain family. Homodimer. Cytoplasmic dynein consists of two catalytic heavy chains (HCs) and a number of non-catalytic subunits which present intermediate chains (ICs), light intermediate chains (LICs) and light chains (LCs). Component of the nuclear pore complex (NPC). NPC constitutes the exclusive means of nucleocytoplasmic transport. NPCs allow the passive diffusion of ions and small molecules and the active, nuclear transport receptor-mediated bidirectional transport of macromolecules such as proteins, RNAs, ribonucleoparticles (RNPs), and ribosomal subunits across the nuclear envelope. Due to its 8-fold rotational symmetry, all subunits are present with 8 copies or multiples thereof.

It is found in the cytoplasm. The protein resides in the cytoskeleton. It localises to the nucleus. The protein localises to the nuclear pore complex. Acts as one of several non-catalytic accessory components of the cytoplasmic dynein complex that are thought to be involved in linking dynein to cargos and to adapter proteins that regulate dynein function. Cytoplasmic dynein 1 acts as a motor for the intracellular retrograde motility of vesicles and organelles along microtubules. May play a role in changing or maintaining the spatial distribution of cytoskeletal structures. Also a component of the nuclear pore complex. The sequence is that of Dynein light chain 1, cytoplasmic (DYN2) from Debaryomyces hansenii (strain ATCC 36239 / CBS 767 / BCRC 21394 / JCM 1990 / NBRC 0083 / IGC 2968) (Yeast).